We begin with the raw amino-acid sequence, 391 residues long: S-adenosylmethionine synthase (391 aa).

The tract at residues 1-20 (MPRSDYLFTSESVSEGHPDK) is disordered. His17 provides a ligand contact to ATP. Asp19 contacts Mg(2+). K(+) is bound at residue Glu45. L-methionine-binding residues include Glu58 and Gln102. The tract at residues 102–112 (QSADIAQGVDA) is flexible loop. Residues 169 to 171 (DAK), 235 to 236 (KF), Asp244, 250 to 251 (RK), Ala267, and Lys271 each bind ATP. Asp244 contacts L-methionine. Lys275 contributes to the L-methionine binding site.

This sequence belongs to the AdoMet synthase family. Homotetramer; dimer of dimers. Requires Mg(2+) as cofactor. The cofactor is K(+).

The protein localises to the cytoplasm. It catalyses the reaction L-methionine + ATP + H2O = S-adenosyl-L-methionine + phosphate + diphosphate. Its pathway is amino-acid biosynthesis; S-adenosyl-L-methionine biosynthesis; S-adenosyl-L-methionine from L-methionine: step 1/1. Functionally, catalyzes the formation of S-adenosylmethionine (AdoMet) from methionine and ATP. The overall synthetic reaction is composed of two sequential steps, AdoMet formation and the subsequent tripolyphosphate hydrolysis which occurs prior to release of AdoMet from the enzyme. The protein is S-adenosylmethionine synthase of Methylorubrum populi (strain ATCC BAA-705 / NCIMB 13946 / BJ001) (Methylobacterium populi).